Consider the following 222-residue polypeptide: Superoxide dismutase [Mn], mitochondrial (222 aa).

Residues 1–24 (MLSRGVCGTSRQLAPALGYLGSRQ) constitute a mitochondrion transit peptide. His-50 is a binding site for Mn(2+). Residue Tyr-58 is modified to 3'-nitrotyrosine. Lys-68 and Lys-75 each carry N6-acetyllysine; alternate. 2 positions are modified to N6-succinyllysine; alternate: Lys-68 and Lys-75. Residue His-98 coordinates Mn(2+). N6-acetyllysine is present on Lys-114. Lys-122 and Lys-130 each carry N6-acetyllysine; alternate. N6-succinyllysine; alternate occurs at positions 122 and 130. Asp-183 and His-187 together coordinate Mn(2+). Position 202 is an N6-acetyllysine (Lys-202).

The protein belongs to the iron/manganese superoxide dismutase family. Homotetramer. Mn(2+) is required as a cofactor. Nitrated under oxidative stress. Nitration coupled with oxidation inhibits the catalytic activity. In terms of processing, acetylation at Lys-122 decreases enzymatic activity. Deacetylated by SIRT3 upon exposure to ionizing radiations or after long fasting. Post-translationally, polyubiquitinated; leading to proteasomal degradation. Deubiquitinated by USP36 which increases protein stability.

It localises to the mitochondrion matrix. The catalysed reaction is 2 superoxide + 2 H(+) = H2O2 + O2. Its function is as follows. Destroys superoxide anion radicals which are normally produced within the cells and which are toxic to biological systems. This is Superoxide dismutase [Mn], mitochondrial (SOD2) from Pongo pygmaeus (Bornean orangutan).